Reading from the N-terminus, the 234-residue chain is tRNA (guanine-N(1)-)-methyltransferase (234 aa).

S-adenosyl-L-methionine is bound by residues Gly-115 and 135-140 (VGDYIL).

The protein belongs to the RNA methyltransferase TrmD family. As to quaternary structure, homodimer.

It localises to the cytoplasm. The enzyme catalyses guanosine(37) in tRNA + S-adenosyl-L-methionine = N(1)-methylguanosine(37) in tRNA + S-adenosyl-L-homocysteine + H(+). In terms of biological role, specifically methylates guanosine-37 in various tRNAs. This is tRNA (guanine-N(1)-)-methyltransferase from Rickettsia peacockii (strain Rustic).